The following is a 628-amino-acid chain: Nucleoside-triphosphatase 1 (628 aa).

The signal sequence occupies residues 1–25 (MWLPVYVPLLLVFGVSLSLPQGSLG). Residue glutamate 236 is the Proton acceptor of the active site. A glycan (N-linked (GlcNAc...) asparagine) is linked at asparagine 432.

Belongs to the GDA1/CD39 NTPase family. In terms of assembly, homotetramer.

The protein localises to the secreted. It localises to the parasitophorous vacuole. It carries out the reaction a ribonucleoside 5'-triphosphate + H2O = a ribonucleoside 5'-diphosphate + phosphate + H(+). In terms of biological role, may perform an important processing step in the conversion of high energy nucleotides prior to uptake by the parasite and may contribute to intracellular survival and virulence. NTPAse-I has a specific activity 4.5-fold higher than NTPAse-II in hydrolysis of ATP. The primary difference between these isozymes lies in their ability to hydrolyze nucleoside triphosphate versus diphosphate substrates. While NTPAse-II hydrolyzes ATP to ADP and ADP to AMP at almost the same rate, NTPAse-I hydrolyzes ADP to AMP at a much slower rate (0.7% of the rate for ATP). The protein is Nucleoside-triphosphatase 1 (NTP3) of Toxoplasma gondii.